We begin with the raw amino-acid sequence, 293 residues long: Ribosomal protein L11 methyltransferase (293 aa).

T145, G166, D188, and N230 together coordinate S-adenosyl-L-methionine.

This sequence belongs to the methyltransferase superfamily. PrmA family.

The protein resides in the cytoplasm. The catalysed reaction is L-lysyl-[protein] + 3 S-adenosyl-L-methionine = N(6),N(6),N(6)-trimethyl-L-lysyl-[protein] + 3 S-adenosyl-L-homocysteine + 3 H(+). Functionally, methylates ribosomal protein L11. This Salmonella heidelberg (strain SL476) protein is Ribosomal protein L11 methyltransferase.